A 295-amino-acid polypeptide reads, in one-letter code: Glutamyl-Q tRNA(Asp) synthetase (295 aa).

Residues 5–9 and Glu41 each bind L-glutamate; that span reads RFAPS. The 'HIGH' region motif lies at 8–18; that stretch reads PSPTGLLHIGS. 4 residues coordinate Zn(2+): Cys97, Cys99, Tyr117, and Cys121. 2 residues coordinate L-glutamate: Tyr178 and Arg196. The 'KMSKS' region signature appears at 234 to 238; that stretch reads KWSKQ. Lys237 provides a ligand contact to ATP.

The protein belongs to the class-I aminoacyl-tRNA synthetase family. GluQ subfamily. Zn(2+) is required as a cofactor.

Functionally, catalyzes the tRNA-independent activation of glutamate in presence of ATP and the subsequent transfer of glutamate onto a tRNA(Asp). Glutamate is transferred on the 2-amino-5-(4,5-dihydroxy-2-cyclopenten-1-yl) moiety of the queuosine in the wobble position of the QUC anticodon. This is Glutamyl-Q tRNA(Asp) synthetase from Neisseria gonorrhoeae (strain ATCC 700825 / FA 1090).